Reading from the N-terminus, the 369-residue chain is Secondary metabolism regulator laeA (369 aa).

Residues 1–37 (MFGNGQTGQRLPAMASPPHDSYYSQSLASSRSRNNSD) are disordered. The segment covering 20–37 (DSYYSQSLASSRSRNNSD) has biased composition (low complexity).

The protein belongs to the methyltransferase superfamily. LaeA methyltransferase family. In terms of assembly, component of the heterotrimeric velvet complex composed of laeA, veA and velB; VeA acting as a bridging protein between laeA and velB. Interacts directly with veA.

The protein localises to the nucleus. It carries out the reaction L-methionyl-[protein] + S-adenosyl-L-methionine = S-methyl-L-methionyl-[protein] + S-adenosyl-L-homocysteine. Its function is as follows. Methyltransferase that performs automethylation. No other methyl-accepting substrate has been identified yet. Component of the velvet transcription factor complex that acts as a global regulator for secondary metabolite gene expression. Required for aflR expression and subsequent aflatoxin production. Negatively regulates veA expression. Controls conidiophore and conidial development. Required for hydrophobin production which plays a role in cell surface hydrophobicity and host defense escape. The polypeptide is Secondary metabolism regulator laeA (Aspergillus flavus (strain ATCC 200026 / FGSC A1120 / IAM 13836 / NRRL 3357 / JCM 12722 / SRRC 167)).